The primary structure comprises 320 residues: Aminoacyl tRNA synthase complex-interacting multifunctional protein 2 (320 aa).

Ser36 carries the post-translational modification Phosphoserine. The tract at residues Thr82–Pro162 is interaction with PRKN. The interval Pro162 to Gln225 is interaction with TP53. The GST C-terminal domain occupies Leu220–Lys317.

As to quaternary structure, part of the multisynthetase complex (MSC), a multisubunit complex that groups tRNA ligases for Arg (RARS1), Asp (DARS1), Gln (QARS1), Ile (IARS1), Leu (LARS1), Lys (KARS1), Met (MARS1) the bifunctional ligase for Glu and Pro (EPRS1) and the auxiliary subunits AIMP1/p43, AIMP2/p38 and EEF1E1/p18. Interacts (via N-terminus) with KARS1. Interacts with EPRS1. Forms a linear complex that contains MARS1, EEF1E1, EPRS1 and AIMP2 that is at the core of the multisubunit complex. Binds FUBP1 (via C-terminus). Interacts in both its unphosphorylated and phosphorylated forms with p53/TP53 (via N-terminus) in the nucleus following UV irradiation. Interacts (via N-terminus) with PRKN/parkin (via first RING-type domain). Interacts with TARS3. Post-translationally, phosphorylated on serine residues in response to UV irradiation. In terms of processing, ubiquitinated by PRKN, leading to its degradation by the proteasome.

The protein localises to the cytoplasm. It localises to the cytosol. Its subcellular location is the nucleus. Required for assembly and stability of the aminoacyl-tRNA synthase complex. Mediates ubiquitination and degradation of FUBP1, a transcriptional activator of MYC, leading to MYC down-regulation which is required for aveolar type II cell differentiation. Blocks MDM2-mediated ubiquitination and degradation of p53/TP53. Functions as a proapoptotic factor. In Bos taurus (Bovine), this protein is Aminoacyl tRNA synthase complex-interacting multifunctional protein 2 (AIMP2).